The primary structure comprises 322 residues: ATP-dependent 6-phosphofructokinase (322 aa).

An ATP-binding site is contributed by glycine 13. 23 to 27 (RAVVR) is an ADP binding site. ATP-binding positions include 74-75 (RC) and 104-107 (GDGS). Aspartate 105 lines the Mg(2+) pocket. A substrate-binding site is contributed by 127-129 (TID). The active-site Proton acceptor is the aspartate 129. Arginine 156 provides a ligand contact to ADP. Substrate is bound by residues arginine 164 and 171 to 173 (MGR). ADP contacts are provided by residues 187 to 189 (GAE) and 215 to 217 (KRH). Substrate-binding positions include glutamate 224, arginine 246, and 252 to 255 (HIQR).

Belongs to the phosphofructokinase type A (PFKA) family. ATP-dependent PFK group I subfamily. Prokaryotic clade 'B1' sub-subfamily. Homotetramer. Mg(2+) serves as cofactor.

The protein localises to the cytoplasm. It carries out the reaction beta-D-fructose 6-phosphate + ATP = beta-D-fructose 1,6-bisphosphate + ADP + H(+). Its pathway is carbohydrate degradation; glycolysis; D-glyceraldehyde 3-phosphate and glycerone phosphate from D-glucose: step 3/4. Its activity is regulated as follows. Allosterically activated by ADP and other diphosphonucleosides, and allosterically inhibited by phosphoenolpyruvate. Functionally, catalyzes the phosphorylation of D-fructose 6-phosphate to fructose 1,6-bisphosphate by ATP, the first committing step of glycolysis. The protein is ATP-dependent 6-phosphofructokinase of Paenibacillus macquariensis (Bacillus macquariensis).